A 128-amino-acid polypeptide reads, in one-letter code: Ribosome-binding factor A (128 aa).

The protein belongs to the RbfA family. As to quaternary structure, monomer. Binds 30S ribosomal subunits, but not 50S ribosomal subunits or 70S ribosomes.

Its subcellular location is the cytoplasm. Functionally, one of several proteins that assist in the late maturation steps of the functional core of the 30S ribosomal subunit. Associates with free 30S ribosomal subunits (but not with 30S subunits that are part of 70S ribosomes or polysomes). Required for efficient processing of 16S rRNA. May interact with the 5'-terminal helix region of 16S rRNA. In Pseudomonas paraeruginosa (strain DSM 24068 / PA7) (Pseudomonas aeruginosa (strain PA7)), this protein is Ribosome-binding factor A.